The sequence spans 505 residues: AMP phosphorylase (505 aa).

Residues Gly-170, Ser-196–Ser-201, and Thr-205 each bind AMP. Asp-258 functions as the Proton donor in the catalytic mechanism. Residues Ser-266 and Lys-290 each contribute to the AMP site.

Belongs to the thymidine/pyrimidine-nucleoside phosphorylase family. Type 2 subfamily.

It catalyses the reaction AMP + phosphate = alpha-D-ribose 1,5-bisphosphate + adenine. The catalysed reaction is CMP + phosphate = cytosine + alpha-D-ribose 1,5-bisphosphate. The enzyme catalyses UMP + phosphate = alpha-D-ribose 1,5-bisphosphate + uracil. Catalyzes the conversion of AMP and phosphate to adenine and ribose 1,5-bisphosphate (R15P). Exhibits phosphorylase activity toward CMP and UMP in addition to AMP. Functions in an archaeal AMP degradation pathway, together with R15P isomerase and RubisCO. This chain is AMP phosphorylase, found in Methanococcus maripaludis (strain DSM 14266 / JCM 13030 / NBRC 101832 / S2 / LL).